Consider the following 204-residue polypeptide: LexA repressor (204 aa).

The segment at residues 28–48 (RAEIAQELGFKSPNAAEEHLK) is a DNA-binding region (H-T-H motif). Residues serine 125 and lysine 162 each act as for autocatalytic cleavage activity in the active site.

This sequence belongs to the peptidase S24 family. As to quaternary structure, homodimer.

It carries out the reaction Hydrolysis of Ala-|-Gly bond in repressor LexA.. Functionally, represses a number of genes involved in the response to DNA damage (SOS response), including recA and lexA. In the presence of single-stranded DNA, RecA interacts with LexA causing an autocatalytic cleavage which disrupts the DNA-binding part of LexA, leading to derepression of the SOS regulon and eventually DNA repair. The sequence is that of LexA repressor from Ectopseudomonas mendocina (strain ymp) (Pseudomonas mendocina).